Reading from the N-terminus, the 199-residue chain is NAD(P)H dehydrogenase (quinone) (199 aa).

Residues 4–190 form the Flavodoxin-like domain; that stretch reads VLVLYYSAYG…AGARYQGRRV (187 aa). FMN contacts are provided by residues 10–15 and 78–80; these read SAYGHI and TRF. Tyr12 serves as a coordination point for NAD(+). Trp98 contacts substrate. FMN contacts are provided by residues 113–119 and His134; that span reads STATQHG.

This sequence belongs to the WrbA family. It depends on FMN as a cofactor.

It carries out the reaction a quinone + NADH + H(+) = a quinol + NAD(+). The catalysed reaction is a quinone + NADPH + H(+) = a quinol + NADP(+). The chain is NAD(P)H dehydrogenase (quinone) from Methylocella silvestris (strain DSM 15510 / CIP 108128 / LMG 27833 / NCIMB 13906 / BL2).